The sequence spans 379 residues: UPF0450 protein C17orf58 homolog (379 aa).

Positions 1–17 (MIPALTVPLLFLCATSA) are cleaved as a signal peptide. Disordered stretches follow at residues 76–95 (RTRA…PDKT) and 162–194 (TASQ…MNPH). Residues 180–194 (SMDHESNRPGKMNPH) are compositionally biased toward basic and acidic residues. 3 disulfide bridges follow: C234–C308, C238–C312, and C249–C378. In terms of domain architecture, NTR spans 234 to 378 (CIAECHRDKD…KVLAAAHSKC (145 aa)).

This sequence belongs to the UPF0450 family.

In Xenopus laevis (African clawed frog), this protein is UPF0450 protein C17orf58 homolog.